The chain runs to 377 residues: Flagellin C (377 aa).

2 coiled-coil regions span residues 103 to 129 (SNSK…IAET) and 301 to 340 (VDSH…KDTD).

It belongs to the bacterial flagellin family. In terms of assembly, heteromer of multiple flagellin subunits including FlaA, FlaB, FlaC, FlaD and possibly FlaE.

The protein localises to the secreted. The protein resides in the bacterial flagellum. In terms of biological role, flagellin is the subunit protein which polymerizes to form the filaments of bacterial flagella. FlaC is not essential for flagellar synthesis and motility. The chain is Flagellin C (flaC) from Vibrio anguillarum (Listonella anguillarum).